A 67-amino-acid chain; its full sequence is MVTVIVQEGEPIEKVLKRFKARVEQEQILTELKRREYYEPPSERKKKRERNRRKKILKALKKQQQLI.

Belongs to the bacterial ribosomal protein bS21 family.

This is Small ribosomal subunit protein bS21 (rpsU) from Aquifex aeolicus (strain VF5).